Here is an 811-residue protein sequence, read N- to C-terminus: tRNA(Met) cytidine acetyltransferase TmcA (811 aa).

Residues Q267 and R440 each contribute to the ATP site. Residues 474 to 663 (RKEVYLEEPD…GEFTAIVLKP (190 aa)) enclose the N-acetyltransferase domain. Acetyl-CoA-binding positions include 590–592 (IAT), E630, and R637.

This sequence belongs to the TmcA family.

It is found in the cytoplasm. The enzyme catalyses cytidine(34) in elongator tRNA(Met) + acetyl-CoA + ATP + H2O = N(4)-acetylcytidine(34) in elongator tRNA(Met) + ADP + phosphate + CoA + H(+). The catalysed reaction is a cytidine in RNA + acetyl-CoA + ATP + H2O = an N(4)-acetylcytidine in RNA + ADP + phosphate + CoA + H(+). It catalyses the reaction a cytidine in tRNA + acetyl-CoA + ATP + H2O = an N(4)-acetylcytidine in tRNA + ADP + phosphate + CoA + H(+). It carries out the reaction a cytidine in mRNA + acetyl-CoA + ATP + H2O = an N(4)-acetylcytidine in mRNA + ADP + phosphate + CoA + H(+). In terms of biological role, catalyzes the formation of N(4)-acetylcytidine (ac(4)C) at the wobble position of tRNA(Met), by using acetyl-CoA as an acetyl donor and ATP (or GTP). Functionally, catalyzes the formation of 404 N(4)-acetylcytidine (ac(4)C) sites in RNA, almost always on the middle C of a CCG motif. There 173 ac(4)C sites in rRNA, 35 in non-coding (nc)RNA, 119 in mRNA and 77 in tRNA. More acetylation is observed at 85 and 95 than at 65 or 75 degrees Celsius. The sequence is that of tRNA(Met) cytidine acetyltransferase TmcA from Thermococcus kodakarensis (strain ATCC BAA-918 / JCM 12380 / KOD1) (Pyrococcus kodakaraensis (strain KOD1)).